A 520-amino-acid polypeptide reads, in one-letter code: 2-isopropylmalate synthase (520 aa).

Positions 12 to 274 constitute a Pyruvate carboxyltransferase domain; it reads IRIFDTTLRD…DSAINTPRIV (263 aa). Mn(2+) contacts are provided by D21, H209, H211, and N245. Positions 396-520 are regulatory domain; sequence RLASMTISDV…VIAGKTAAVA (125 aa).

This sequence belongs to the alpha-IPM synthase/homocitrate synthase family. LeuA type 1 subfamily. In terms of assembly, homodimer. Requires Mn(2+) as cofactor.

Its subcellular location is the cytoplasm. It carries out the reaction 3-methyl-2-oxobutanoate + acetyl-CoA + H2O = (2S)-2-isopropylmalate + CoA + H(+). It functions in the pathway amino-acid biosynthesis; L-leucine biosynthesis; L-leucine from 3-methyl-2-oxobutanoate: step 1/4. Its function is as follows. Catalyzes the condensation of the acetyl group of acetyl-CoA with 3-methyl-2-oxobutanoate (2-ketoisovalerate) to form 3-carboxy-3-hydroxy-4-methylpentanoate (2-isopropylmalate). This is 2-isopropylmalate synthase from Xanthomonas oryzae pv. oryzae (strain MAFF 311018).